The sequence spans 281 residues: Ribosomal protein L11 methyltransferase (281 aa).

Residues T133, G154, D175, and N216 each contribute to the S-adenosyl-L-methionine site.

The protein belongs to the methyltransferase superfamily. PrmA family.

Its subcellular location is the cytoplasm. It catalyses the reaction L-lysyl-[protein] + 3 S-adenosyl-L-methionine = N(6),N(6),N(6)-trimethyl-L-lysyl-[protein] + 3 S-adenosyl-L-homocysteine + 3 H(+). Methylates ribosomal protein L11. This is Ribosomal protein L11 methyltransferase from Campylobacter jejuni subsp. jejuni serotype O:2 (strain ATCC 700819 / NCTC 11168).